Here is a 472-residue protein sequence, read N- to C-terminus: MRSSVLSLHPDRLLPADPGTRAIAGRLYAQIATLPIISPHGHTDPAWFATNAPFADATELLLVPDHYVFRMLYSQGIDLDAIGIPRADGMRAAVDPRAAWRVFAAHYTVLRGTPSALWLNHVFHDVFDLRLRLDAGTADHYYDHITAALQTPDFLPRALFERFNIEVIATTESPLDPLHHHAAIAASGWQGRVVTAYRPDPVVDPEHAQFAGALQQFGALTGEDVLTWNGYLRAHRQRRAFFAAHGATSTDHGHPSAATADLSPAQAQRLFDTVVRGAATPEQAELFRAQVLTEMAAMSLDDGLVMQLHPGCFRNHNRPLFERYGRDKGADIPMRTDYVHALKPLLDRYGNDPRLRLIVFTLDETSYSRELAPLAGHYPSLLLGPAWWFHDAPEGMWRFREQTLASAGFYNTVGFNDDTRAFLSIPARHDVARRVDSAFLAKLVAEHRLEEDEATEVAIDLAYRMPKRAYNL.

It belongs to the metallo-dependent hydrolases superfamily. Uronate isomerase family.

The catalysed reaction is D-glucuronate = D-fructuronate. The enzyme catalyses aldehydo-D-galacturonate = keto-D-tagaturonate. It functions in the pathway carbohydrate metabolism; pentose and glucuronate interconversion. The sequence is that of Uronate isomerase from Xanthomonas oryzae pv. oryzae (strain MAFF 311018).